The sequence spans 528 residues: GTPase Der (528 aa).

Acidic residues-rich tracts occupy residues 1–12 (MDVEGAFADEEE) and 30–62 (GYDD…PDFG). Residues 1–62 (MDVEGAFADE…EDDFAAPDFG (62 aa)) form a disordered region. 2 consecutive EngA-type G domains span residues 90–253 (CTVA…PEEP) and 263–436 (RRVA…ENWD). GTP is bound by residues 96-103 (GRPNVGKS), 143-147 (DTGGW), 205-208 (NKFD), 269-276 (GKPNVGKS), 316-320 (DTAGL), and 381-384 (NKWD). The KH-like domain occupies 437–519 (RRVSTGQLNN…PIRIAVRVRE (83 aa)).

Belongs to the TRAFAC class TrmE-Era-EngA-EngB-Septin-like GTPase superfamily. EngA (Der) GTPase family. In terms of assembly, associates with the 50S ribosomal subunit.

Its function is as follows. GTPase that plays an essential role in the late steps of ribosome biogenesis. This chain is GTPase Der, found in Corynebacterium efficiens (strain DSM 44549 / YS-314 / AJ 12310 / JCM 11189 / NBRC 100395).